A 227-amino-acid polypeptide reads, in one-letter code: UPF0758 protein llmg_1515 (227 aa).

Positions 103–225 constitute an MPN domain; sequence QVLSSKEYGM…YYSFRERDSN (123 aa). Positions 174, 176, and 187 each coordinate Zn(2+). The JAMM motif signature appears at 174 to 187; that stretch reads HNHPSGNLQPSQAD.

It belongs to the UPF0758 family.

The protein is UPF0758 protein llmg_1515 of Lactococcus lactis subsp. cremoris (strain MG1363).